Here is a 537-residue protein sequence, read N- to C-terminus: Protoporphyrinogen oxidase 1, chloroplastic (537 aa).

Residues 1–34 (MELSLLRPTTQSLLPSFSKPNLRLNVYKPLRLRC) constitute a chloroplast transit peptide. Ser35 is subject to N-acetylserine. FAD is bound by residues 63-68 (GGGISG), 90-91 (EA), and 112-115 (GPNS). Basic and acidic residues predominate over residues 256-268 (RKNAPKAERDPRL). Residues 256-275 (RKNAPKAERDPRLPKPQGQT) form a disordered region. 511–513 (VAL) is a binding site for FAD.

It belongs to the protoporphyrinogen/coproporphyrinogen oxidase family. Protoporphyrinogen oxidase subfamily. FAD serves as cofactor. In terms of tissue distribution, expressed at high levels in the leaves and at low levels in the roots and floral buds.

It is found in the plastid. Its subcellular location is the chloroplast. It carries out the reaction protoporphyrinogen IX + 3 O2 = protoporphyrin IX + 3 H2O2. It functions in the pathway porphyrin-containing compound metabolism; protoporphyrin-IX biosynthesis; protoporphyrin-IX from protoporphyrinogen-IX: step 1/1. The protein operates within porphyrin-containing compound metabolism; chlorophyll biosynthesis. With respect to regulation, inhibited by acifluorfen. Its function is as follows. Catalyzes the 6-electron oxidation of protoporphyrinogen-IX to form protoporphyrin-IX. In Arabidopsis thaliana (Mouse-ear cress), this protein is Protoporphyrinogen oxidase 1, chloroplastic (PPOX1).